We begin with the raw amino-acid sequence, 128 residues long: UPF0325 protein PMI2289 (128 aa).

It belongs to the UPF0325 family.

The sequence is that of UPF0325 protein PMI2289 from Proteus mirabilis (strain HI4320).